The sequence spans 87 residues: Large ribosomal subunit protein bL31B (87 aa).

It belongs to the bacterial ribosomal protein bL31 family. Type B subfamily. As to quaternary structure, part of the 50S ribosomal subunit.

The sequence is that of Large ribosomal subunit protein bL31B from Burkholderia vietnamiensis (strain G4 / LMG 22486) (Burkholderia cepacia (strain R1808)).